Here is a 681-residue protein sequence, read N- to C-terminus: Minichromosome maintenance domain-containing protein 2 (681 aa).

A Phosphoserine modification is found at Ser-292. The MCM domain maps to 533 to 621; the sequence is KQFTTEDFEK…LIAALLLEIS (89 aa).

Predominantly expressed in the gonads and the brain. Not detected in the heart, lung, nor embryonic fibroblasts.

Its function is as follows. Plays an important role in meiotic recombination and associated DNA double-strand break repair. This Mus musculus (Mouse) protein is Minichromosome maintenance domain-containing protein 2 (Mcmdc2).